The primary structure comprises 287 residues: ADP-dependent (S)-NAD(P)H-hydrate dehydratase (287 aa).

The YjeF C-terminal domain occupies 7–283 (GEDDVRKFVP…ELLPSVMKPF (277 aa)). (6S)-NADPHX is bound by residues alanine 42 and histidine 159. Residues 196–200 (KGPTD) and glycine 224 each bind AMP. Aspartate 225 contributes to the (6S)-NADPHX binding site.

Belongs to the NnrD/CARKD family. In terms of assembly, homotetramer. Mg(2+) serves as cofactor.

The catalysed reaction is (6S)-NADHX + ADP = AMP + phosphate + NADH + H(+). It catalyses the reaction (6S)-NADPHX + ADP = AMP + phosphate + NADPH + H(+). Its function is as follows. Catalyzes the dehydration of the S-form of NAD(P)HX at the expense of ADP, which is converted to AMP. Together with NAD(P)HX epimerase, which catalyzes the epimerization of the S- and R-forms, the enzyme allows the repair of both epimers of NAD(P)HX, a damaged form of NAD(P)H that is a result of enzymatic or heat-dependent hydration. This Cenarchaeum symbiosum (strain A) protein is ADP-dependent (S)-NAD(P)H-hydrate dehydratase.